The primary structure comprises 79 residues: Acyl carrier protein 2 (79 aa).

The Carrier domain occupies 2-77 (DDIETRVRKL…QAIDYLEEAV (76 aa)). Ser37 is subject to O-(pantetheine 4'-phosphoryl)serine.

It belongs to the acyl carrier protein (ACP) family. Post-translationally, 4'-phosphopantetheine is transferred from CoA to a specific serine of apo-ACP by AcpS. This modification is essential for activity because fatty acids are bound in thioester linkage to the sulfhydryl of the prosthetic group.

Its subcellular location is the cytoplasm. It functions in the pathway lipid metabolism; fatty acid biosynthesis. Its function is as follows. Carrier of the growing fatty acid chain in fatty acid biosynthesis. The protein is Acyl carrier protein 2 of Pseudomonas aeruginosa (strain ATCC 15692 / DSM 22644 / CIP 104116 / JCM 14847 / LMG 12228 / 1C / PRS 101 / PAO1).